The chain runs to 484 residues: Glutamyl-tRNA(Gln) amidotransferase subunit A (484 aa).

Catalysis depends on charge relay system residues lysine 77 and serine 152. Serine 176 functions as the Acyl-ester intermediate in the catalytic mechanism.

Belongs to the amidase family. GatA subfamily. Heterotrimer of A, B and C subunits.

It catalyses the reaction L-glutamyl-tRNA(Gln) + L-glutamine + ATP + H2O = L-glutaminyl-tRNA(Gln) + L-glutamate + ADP + phosphate + H(+). Functionally, allows the formation of correctly charged Gln-tRNA(Gln) through the transamidation of misacylated Glu-tRNA(Gln) in organisms which lack glutaminyl-tRNA synthetase. The reaction takes place in the presence of glutamine and ATP through an activated gamma-phospho-Glu-tRNA(Gln). The chain is Glutamyl-tRNA(Gln) amidotransferase subunit A from Pseudomonas aeruginosa (strain LESB58).